We begin with the raw amino-acid sequence, 294 residues long: tRNA dimethylallyltransferase (294 aa).

Glycine 10 to threonine 17 serves as a coordination point for ATP. Position 12-17 (threonine 12–threonine 17) interacts with substrate. An interaction with substrate tRNA region spans residues aspartate 35–glutamine 38.

Belongs to the IPP transferase family. Monomer. It depends on Mg(2+) as a cofactor.

The enzyme catalyses adenosine(37) in tRNA + dimethylallyl diphosphate = N(6)-dimethylallyladenosine(37) in tRNA + diphosphate. Its function is as follows. Catalyzes the transfer of a dimethylallyl group onto the adenine at position 37 in tRNAs that read codons beginning with uridine, leading to the formation of N6-(dimethylallyl)adenosine (i(6)A). This is tRNA dimethylallyltransferase from Streptococcus suis (strain 98HAH33).